A 203-amino-acid chain; its full sequence is Protein-methionine-sulfoxide reductase heme-binding subunit MsrQ (203 aa).

The next 5 membrane-spanning stretches (helical) occupy residues isoleucine 13–glycine 33, leucine 79–glutamate 99, proline 116–threonine 136, tryptophan 147–tryptophan 167, and valine 169–leucine 189.

It belongs to the MsrQ family. As to quaternary structure, heterodimer of a catalytic subunit (MsrP) and a heme-binding subunit (MsrQ). It depends on FMN as a cofactor. Heme b serves as cofactor.

The protein localises to the cell inner membrane. Functionally, part of the MsrPQ system that repairs oxidized periplasmic proteins containing methionine sulfoxide residues (Met-O), using respiratory chain electrons. Thus protects these proteins from oxidative-stress damage caused by reactive species of oxygen and chlorine generated by the host defense mechanisms. MsrPQ is essential for the maintenance of envelope integrity under bleach stress, rescuing a wide series of structurally unrelated periplasmic proteins from methionine oxidation. MsrQ provides electrons for reduction to the reductase catalytic subunit MsrP, using the quinone pool of the respiratory chain. The chain is Protein-methionine-sulfoxide reductase heme-binding subunit MsrQ from Yersinia pseudotuberculosis serotype O:1b (strain IP 31758).